A 521-amino-acid chain; its full sequence is GMP synthase [glutamine-hydrolyzing] (521 aa).

The region spanning 5-203 (KILILDFGSQ…VHEICGCGRD (199 aa)) is the Glutamine amidotransferase type-1 domain. Cys82 (nucleophile) is an active-site residue. Active-site residues include His177 and Glu179. Residues 204 to 396 (WNMPDYVNEA…LGLPHEMVYR (193 aa)) form the GMPS ATP-PPase domain. Residue 231 to 237 (SGGVDSS) participates in ATP binding.

Homodimer.

It catalyses the reaction XMP + L-glutamine + ATP + H2O = GMP + L-glutamate + AMP + diphosphate + 2 H(+). Its pathway is purine metabolism; GMP biosynthesis; GMP from XMP (L-Gln route): step 1/1. In terms of biological role, catalyzes the synthesis of GMP from XMP. This Aromatoleum aromaticum (strain DSM 19018 / LMG 30748 / EbN1) (Azoarcus sp. (strain EbN1)) protein is GMP synthase [glutamine-hydrolyzing].